A 398-amino-acid chain; its full sequence is Acetate kinase (398 aa).

Asn-8 contacts Mg(2+). Lys-15 is a binding site for ATP. Arg-89 provides a ligand contact to substrate. Asp-146 serves as the catalytic Proton donor/acceptor. Residues 206–210 (HIGNG), 283–285 (DMR), and 331–335 (GMGEN) contribute to the ATP site. Glu-383 is a binding site for Mg(2+).

Belongs to the acetokinase family. In terms of assembly, homodimer. Requires Mg(2+) as cofactor. Mn(2+) serves as cofactor.

The protein localises to the cytoplasm. The catalysed reaction is acetate + ATP = acetyl phosphate + ADP. Its pathway is metabolic intermediate biosynthesis; acetyl-CoA biosynthesis; acetyl-CoA from acetate: step 1/2. Catalyzes the formation of acetyl phosphate from acetate and ATP. Can also catalyze the reverse reaction. The sequence is that of Acetate kinase from Streptococcus pyogenes serotype M28 (strain MGAS6180).